A 264-amino-acid chain; its full sequence is Hydroxyethylthiazole kinase (264 aa).

Position 55 (Met-55) interacts with substrate. Arg-130 and Ser-176 together coordinate ATP. Gly-203 is a binding site for substrate.

This sequence belongs to the Thz kinase family. Requires Mg(2+) as cofactor.

The catalysed reaction is 5-(2-hydroxyethyl)-4-methylthiazole + ATP = 4-methyl-5-(2-phosphooxyethyl)-thiazole + ADP + H(+). It functions in the pathway cofactor biosynthesis; thiamine diphosphate biosynthesis; 4-methyl-5-(2-phosphoethyl)-thiazole from 5-(2-hydroxyethyl)-4-methylthiazole: step 1/1. Functionally, catalyzes the phosphorylation of the hydroxyl group of 4-methyl-5-beta-hydroxyethylthiazole (THZ). The protein is Hydroxyethylthiazole kinase of Leptospira borgpetersenii serovar Hardjo-bovis (strain JB197).